The primary structure comprises 235 residues: Lipoprotein-releasing system ATP-binding protein LolD (235 aa).

An ABC transporter domain is found at 7-234; sequence LQCTNLSKRY…QQELTLMGAR (228 aa). Position 43–50 (43–50) interacts with ATP; that stretch reads GSSGSGKS.

It belongs to the ABC transporter superfamily. Lipoprotein translocase (TC 3.A.1.125) family. As to quaternary structure, the complex is composed of two ATP-binding proteins (LolD) and two transmembrane proteins (LolC and LolE).

It is found in the cell inner membrane. Functionally, part of the ABC transporter complex LolCDE involved in the translocation of mature outer membrane-directed lipoproteins, from the inner membrane to the periplasmic chaperone, LolA. Responsible for the formation of the LolA-lipoprotein complex in an ATP-dependent manner. This Pectobacterium atrosepticum (strain SCRI 1043 / ATCC BAA-672) (Erwinia carotovora subsp. atroseptica) protein is Lipoprotein-releasing system ATP-binding protein LolD.